Consider the following 553-residue polypeptide: Retrotransposon Gag-like protein 3 (553 aa).

Residues 2-43 are a coiled coil; it reads VEDLAASYVTLKLENEILQAQVKRLMEENAALQAQIPELQKS. Disordered stretches follow at residues 38 to 274 and 474 to 514; these read PELQ…PLDP and SGGV…EAER. The span at 45–57 shows a compositional bias: basic and acidic residues; the sequence is AVKEHEPLRKPSE. Over residues 58–73 the composition is skewed to low complexity; the sequence is AQEPPESPEFPAARES. Basic and acidic residues predominate over residues 87–113; the sequence is EPTKIREPREPSAISELREPPEIKEPQ. Positions 118-127 are enriched in polar residues; sequence TNESGESSAI. The segment covering 132-147 has biased composition (basic and acidic residues); the sequence is GSPEIKEPHLPPKSKE. Polar residues predominate over residues 239–250; the sequence is QTVPEYQETSSQ. The segment covering 474 to 483 has biased composition (low complexity); that stretch reads SGGVDSSSSS. Over residues 495–507 the composition is skewed to polar residues; the sequence is TENQPVQATSNRP. Residues 523–537 form a CCHC-type zinc finger; it reads CLYCGHPGHFARDCP.

In terms of tissue distribution, expressed in embryonic myogenic progenitor cells, not expressed in adult and aged satellite cells.

Its subcellular location is the nucleus. Its function is as follows. May function as a transcriptional regulator. Plays a role in postnatal myogenesis, may be involved in the regulation of satellite cells self-renewal. This is Retrotransposon Gag-like protein 3 from Mus musculus (Mouse).